We begin with the raw amino-acid sequence, 301 residues long: Phosphatidylglycerol--prolipoprotein diacylglyceryl transferase (301 aa).

The next 4 membrane-spanning stretches (helical) occupy residues 10-30 (IAFSLGPVKVHWYGLMYLAGF), 57-77 (LLFYAMMGVVLGGRVGYMLFY), 92-112 (VWEGGMSFHGGLIGVLLAVAW), and 119-139 (MHMFDVVDFCAPLVPVGLGFG). Residue arginine 140 coordinates a 1,2-diacyl-sn-glycero-3-phospho-(1'-sn-glycerol). Transmembrane regions (helical) follow at residues 202–222 (PSQLYEAFLEGLVMFIVLWLF), 230–250 (YAVSGLFALLYGVFRFLVEFV), and 264–284 (LTRGQILSLPLIVIGLFLFWL).

It belongs to the Lgt family.

The protein resides in the cell inner membrane. The enzyme catalyses L-cysteinyl-[prolipoprotein] + a 1,2-diacyl-sn-glycero-3-phospho-(1'-sn-glycerol) = an S-1,2-diacyl-sn-glyceryl-L-cysteinyl-[prolipoprotein] + sn-glycerol 1-phosphate + H(+). Its pathway is protein modification; lipoprotein biosynthesis (diacylglyceryl transfer). Functionally, catalyzes the transfer of the diacylglyceryl group from phosphatidylglycerol to the sulfhydryl group of the N-terminal cysteine of a prolipoprotein, the first step in the formation of mature lipoproteins. The sequence is that of Phosphatidylglycerol--prolipoprotein diacylglyceryl transferase from Xylella fastidiosa (strain M23).